The sequence spans 605 residues: F-box/WD repeat-containing protein 1A (605 aa).

Residues 128 to 177 (ASYEKEKELCVKYFEQWSESDQVEFVEHLISQMCHYQHGHINSYLKPMLQ) are homodimerization domain D. One can recognise an F-box domain in the interval 190–228 (DHIAENILSYLDAKSLCAAELVCKEWYRVTSDGMLWKKL). The segment at 190-228 (DHIAENILSYLDAKSLCAAELVCKEWYRVTSDGMLWKKL) is required for down-regulation of SNAI1. WD repeat units lie at residues 301 to 338 (ETSKGVYCLQYDDQKIVSGLRDNTIKIWDKNTLECKRI), 341 to 378 (GHTGSVLCLQYDERVIITGSSDSTVRVWDVNTGEMLNT), 381 to 418 (HHCEAVLHLRFNNGMMVTCSKDRSIAVWDMASPTDITL), 424 to 461 (GHRAAVNVVDFDDKYIVSASGDRTIKVWNTSTCEFVRT), 464 to 503 (GHKRGIACLQYRDRLVVSGSSDNTIRLWDIECGACLRVLE), 505 to 541 (HEELVRCIRFDNKRIVSGAYDGKIKVWDLVAALDPRA), and 553 to 590 (EHSGRVFRLQFDEFQIVSSSHDDTILIWDFLNDPAAQA).

Homodimer. Self-associates. Component of the SCF(BTRC) complex formed of CUL1, SKP1, RBX1 and a BTRC dimer. Direct interaction with SKP1 occurs via the F-box domain. Interacts with phosphorylated ubiquitination substrates SMAD3 and SMAD4. Interacts with phosphorylated ubiquitination substrates CTNNB1, NFKBIA, NFKBIB, NFKBIE, NFKB1/nuclear factor NF-kappa-B p105 subunit, ATF4, CDC25A, DLG1, FBXO5 and SNAI1; the interaction requires the phosphorylation of the 2 serine residues in the substrate destruction motif D-S-G-X(2,3,4)-S. Binds UBQLN1. Interacts with CDC34 and UBE2R2. Interacts with FBXW11. Interacts with CUL4A and DDB1. Part of a SCF(BTRC)-like complex lacking CUL1, which is associated with phosphorylated NKBIA and RELA; RELA interacts directly with NFKBIA. Interacts with the phosphorylated form of GLI3. Interacts with CLU. Interacts with PER1 (phosphorylated), PER2 (phosphorylated) and PER3. Interacts with phosphorylated ubiquitination substrate CEP68. Interacts with ZC3H12A; this interaction occurs when ZC3H12A is phosphorylated in a IKBKB/IKKB-dependent manner. Interacts with HSF1; this interaction occurs during mitosis and induces HSF1 ubiquitin-dependent degradation, a process inhibited by CDC20. Interacts with NFE2L1. Interacts with INAVA. Interacts with IL10RA; this interaction leads to IL10RA ubiquitination and subsequent degradation. Interacts with REST. Interacts with KLF4; this interaction leads to KLF4 ubiquitination and subsequent degradation. Interacts with UBR2, as part of a SCF(BTRC) complex; the interaction mediates 'Lys-48'-linked ubiquitination of UBR2 and is regulated by DUSP22 in the T-cell receptor signaling pathway. As to quaternary structure, (Microbial infection) Interacts with vaccinia virus A49; this interaction inhibits NF-kappa-B activation. In terms of assembly, (Microbial infection) Interacts with HIV-1 Vpu. Ubiquitinated. Deubiquitinated by OTUD5, promoting its stability. As to expression, expressed in epididymis (at protein level).

It localises to the cytoplasm. The protein localises to the nucleus. The protein operates within protein modification; protein ubiquitination. Substrate recognition component of a SCF (SKP1-CUL1-F-box protein) E3 ubiquitin-protein ligase complex which mediates the ubiquitination and subsequent proteasomal degradation of target proteins. Recognizes and binds to phosphorylated target proteins. SCF(BTRC) mediates the ubiquitination of CTNNB1 and participates in Wnt signaling. SCF(BTRC) mediates the ubiquitination of phosphorylated NFKB1, ATF4, CDC25A, DLG1, FBXO5, PER1, SMAD3, SMAD4, SNAI1 and probably NFKB2. SCF(BTRC) mediates the ubiquitination of NFKBIA, NFKBIB and NFKBIE; the degradation frees the associated NFKB1 to translocate into the nucleus and to activate transcription. Ubiquitination of NFKBIA occurs at 'Lys-21' and 'Lys-22'. The SCF(FBXW11) complex also regulates NF-kappa-B by mediating ubiquitination of phosphorylated NFKB1: specifically ubiquitinates the p105 form of NFKB1, leading to its degradation. SCF(BTRC) mediates the ubiquitination of CEP68; this is required for centriole separation during mitosis. SCF(BTRC) mediates the ubiquitination and subsequent degradation of nuclear NFE2L1. Has an essential role in the control of the clock-dependent transcription via degradation of phosphorylated PER1 and PER2. May be involved in ubiquitination and subsequent proteasomal degradation through a DBB1-CUL4 E3 ubiquitin-protein ligase. Required for activation of NFKB-mediated transcription by IL1B, MAP3K14, MAP3K1, IKBKB and TNF. Required for proteolytic processing of GLI3. Mediates ubiquitination of REST, thereby leading to its proteasomal degradation. SCF(BTRC) mediates the ubiquitination and subsequent proteasomal degradation of KLF4; thereby negatively regulating cell pluripotency maintenance and embryogenesis. SCF(BTRC) acts as a regulator of mTORC1 signaling pathway by catalyzing ubiquitination and subsequent proteasomal degradation of phosphorylated DEPTOR, TFE3 and MITF. SCF(BTRC) directs 'Lys-48'-linked ubiquitination of UBR2 in the T-cell receptor signaling pathway. The polypeptide is F-box/WD repeat-containing protein 1A (BTRC) (Homo sapiens (Human)).